A 335-amino-acid polypeptide reads, in one-letter code: Biotin synthase (335 aa).

The region spanning 47-276 (FYGKKVKLNM…SKEIRISGGR (230 aa)) is the Radical SAM core domain. Residues Cys-65, Cys-69, and Cys-72 each coordinate [4Fe-4S] cluster. [2Fe-2S] cluster contacts are provided by Cys-109, Cys-141, Cys-201, and Arg-271.

The protein belongs to the radical SAM superfamily. Biotin synthase family. In terms of assembly, homodimer. The cofactor is [4Fe-4S] cluster. It depends on [2Fe-2S] cluster as a cofactor.

The catalysed reaction is (4R,5S)-dethiobiotin + (sulfur carrier)-SH + 2 reduced [2Fe-2S]-[ferredoxin] + 2 S-adenosyl-L-methionine = (sulfur carrier)-H + biotin + 2 5'-deoxyadenosine + 2 L-methionine + 2 oxidized [2Fe-2S]-[ferredoxin]. It participates in cofactor biosynthesis; biotin biosynthesis; biotin from 7,8-diaminononanoate: step 2/2. Its function is as follows. Catalyzes the conversion of dethiobiotin (DTB) to biotin by the insertion of a sulfur atom into dethiobiotin via a radical-based mechanism. In Bacillus subtilis (strain 168), this protein is Biotin synthase.